Here is a 320-residue protein sequence, read N- to C-terminus: Lipoyl synthase (320 aa).

7 residues coordinate [4Fe-4S] cluster: cysteine 67, cysteine 72, cysteine 78, cysteine 93, cysteine 97, cysteine 100, and serine 307. The region spanning phenylalanine 79–glutamate 296 is the Radical SAM core domain.

Belongs to the radical SAM superfamily. Lipoyl synthase family. Requires [4Fe-4S] cluster as cofactor.

It localises to the cytoplasm. It carries out the reaction [[Fe-S] cluster scaffold protein carrying a second [4Fe-4S](2+) cluster] + N(6)-octanoyl-L-lysyl-[protein] + 2 oxidized [2Fe-2S]-[ferredoxin] + 2 S-adenosyl-L-methionine + 4 H(+) = [[Fe-S] cluster scaffold protein] + N(6)-[(R)-dihydrolipoyl]-L-lysyl-[protein] + 4 Fe(3+) + 2 hydrogen sulfide + 2 5'-deoxyadenosine + 2 L-methionine + 2 reduced [2Fe-2S]-[ferredoxin]. It functions in the pathway protein modification; protein lipoylation via endogenous pathway; protein N(6)-(lipoyl)lysine from octanoyl-[acyl-carrier-protein]: step 2/2. In terms of biological role, catalyzes the radical-mediated insertion of two sulfur atoms into the C-6 and C-8 positions of the octanoyl moiety bound to the lipoyl domains of lipoate-dependent enzymes, thereby converting the octanoylated domains into lipoylated derivatives. The polypeptide is Lipoyl synthase (Haemophilus influenzae (strain PittEE)).